A 630-amino-acid chain; its full sequence is tRNA uridine 5-carboxymethylaminomethyl modification enzyme MnmG (630 aa).

13-18 (GGGHAG) is a binding site for FAD. 273–287 (GPRYCPSIEDKIHRF) serves as a coordination point for NAD(+).

It belongs to the MnmG family. In terms of assembly, homodimer. Heterotetramer of two MnmE and two MnmG subunits. It depends on FAD as a cofactor.

It localises to the cytoplasm. In terms of biological role, NAD-binding protein involved in the addition of a carboxymethylaminomethyl (cmnm) group at the wobble position (U34) of certain tRNAs, forming tRNA-cmnm(5)s(2)U34. The protein is tRNA uridine 5-carboxymethylaminomethyl modification enzyme MnmG of Pseudomonas putida (strain W619).